Reading from the N-terminus, the 320-residue chain is Cytochrome f (320 aa).

A signal peptide spans 1-35; that stretch reads MQTRNAFSWLKKQITRSISVSLMIYILTRTSISSA. 4 residues coordinate heme: Tyr36, Cys56, Cys59, and His60. The chain crosses the membrane as a helical span at residues 286–306; sequence VQGLLFFLASVILAQIFLVLK.

Belongs to the cytochrome f family. The 4 large subunits of the cytochrome b6-f complex are cytochrome b6, subunit IV (17 kDa polypeptide, petD), cytochrome f and the Rieske protein, while the 4 small subunits are PetG, PetL, PetM and PetN. The complex functions as a dimer. Requires heme as cofactor.

The protein resides in the plastid. The protein localises to the chloroplast thylakoid membrane. In terms of biological role, component of the cytochrome b6-f complex, which mediates electron transfer between photosystem II (PSII) and photosystem I (PSI), cyclic electron flow around PSI, and state transitions. This Solanum bulbocastanum (Wild potato) protein is Cytochrome f.